A 186-amino-acid chain; its full sequence is ADP-ribosylation factor-like protein 6 (186 aa).

Gly-2 is lipidated: N-myristoyl glycine. GTP is bound by residues 24 to 31, 69 to 73, and 130 to 133; these read GLDNSGKT, DMSGQ, and NKMD.

This sequence belongs to the small GTPase superfamily. Arf family. Interacts with SEC61B, ARL6IP1, ARL6IP2, ARL6IP3, ARL6IP4 ARL6IP5 and ARL6IP6. Interacts (GTP-bound form) with the BBSome a complex that contains BBS1, BBS2, BBS4, BBS5, BBS7, BBS8/TTC8, BBS9 and BBIP10. Interacts (GTP-free form) with IFT27.

It localises to the cell projection. The protein resides in the cilium membrane. Its subcellular location is the cytoplasm. The protein localises to the cytoskeleton. It is found in the cilium axoneme. It localises to the cilium basal body. Its function is as follows. Involved in membrane protein trafficking at the base of the ciliary organelle. Mediates recruitment onto plasma membrane of the BBSome complex which would constitute a coat complex required for sorting of specific membrane proteins to the primary cilia. Together with the BBSome complex and LTZL1, controls SMO ciliary trafficking and contributes to the sonic hedgehog (SHH) pathway regulation. May regulate cilia assembly and disassembly and subsequent ciliary signaling events such as the Wnt signaling cascade. Isoform 2 may be required for proper retinal function and organization. In Bos taurus (Bovine), this protein is ADP-ribosylation factor-like protein 6 (ARL6).